The primary structure comprises 158 residues: Transcriptional regulator MraZ (158 aa).

2 consecutive SpoVT-AbrB domains span residues 5–52 and 91–134; these read IYET…TFSS and AVEC…SQAE.

This sequence belongs to the MraZ family. As to quaternary structure, forms oligomers.

Its subcellular location is the cytoplasm. It is found in the nucleoid. The polypeptide is Transcriptional regulator MraZ (Geobacter sulfurreducens (strain ATCC 51573 / DSM 12127 / PCA)).